We begin with the raw amino-acid sequence, 194 residues long: MNKPSKFALALAFAAVTASGVASAQTVDNWRNPYGNVWKNGTNELCWRDAFWTPATGIPGCDGVPVAQQPKEKPAPMAAKVVFNADTFFDFDKSTLKPEGRQLLDQVAQQARAIDLETIIAVGNTDSIGTEAYNMKLSERRAASVKAYLVSKGIDPNRIYTEGKGKLNPIASNKTAEGRARNRRVEIEIVGSRK.

Positions 1–24 (MNKPSKFALALAFAAVTASGVASA) are cleaved as a signal peptide. The chain crosses the membrane as a beta stranded span at residues 30–38 (WRNPYGNVW). The 117-residue stretch at 77-193 (MAAKVVFNAD…RVEIEIVGSR (117 aa)) folds into the OmpA-like domain.

Belongs to the outer membrane OOP (TC 1.B.6) superfamily.

The protein resides in the cell outer membrane. Structural protein that may protect the integrity of the bacterium. This is Outer membrane protein A from Bordetella avium.